The sequence spans 309 residues: Neuropeptide-like 1 (309 aa).

The signal sequence occupies residues M1 to P28. The propeptide occupies R29–D99. A disordered region spans residues G126 to E147. Residues P133–E144 show a composition bias toward acidic residues. Y164 carries the post-translational modification Tyrosine amide. N182 is subject to Asparagine amide.

In terms of tissue distribution, MTYamide peptide: Expressed in the larval CNS (at protein level). NAP peptide: Expressed in the larval CNS (at protein level). IPNamide peptide: Expressed in the ventral ganglion of the third larval instar and adult brain (at protein level).

It localises to the secreted. Acts as a ligand for the receptor-type guanylate cyclase Gyc76C. Stimulates Gyc76c-dependent cGMP production and modulates the IMD innate immune pathway in response to salt stress by inducing nuclear translocation of NF-kappa-B protein Rel which leads to increased expression of the antimicrobial peptide diptericin. Does not appear to play a role in Gyc76C-mediated wing development. This is Neuropeptide-like 1 (Nplp1) from Drosophila melanogaster (Fruit fly).